We begin with the raw amino-acid sequence, 244 residues long: Probable transcriptional regulatory protein Xfasm12_1059 (244 aa).

Belongs to the TACO1 family.

The protein resides in the cytoplasm. The sequence is that of Probable transcriptional regulatory protein Xfasm12_1059 from Xylella fastidiosa (strain M12).